A 349-amino-acid chain; its full sequence is AA9 family lytic polysaccharide monooxygenase C (349 aa).

Positions 1-19 (MKSTFGLLALAAAAKLVSA) are cleaved as a signal peptide. Cu(2+) is bound by residues H20 and H102. C62 and C183 form a disulfide bridge. H169 contacts O2. Y180 contributes to the Cu(2+) binding site. The interval 233–304 (DGSSSGSSGS…SGSNSGSDSC (72 aa)) is disordered. Composition is skewed to low complexity over residues 234-262 (GSSSGSSGSSGSSPATTTAPAVSVTAAPT) and 269-304 (TSATPTTFVTATKPATTAAPAAPSASSGSNSGSDSC). The CBM1 domain maps to 311–347 (GSVKIYGQCGGQNYSGPTSCEAGLICKEWNPYYHQCV). Cystine bridges form between C319–C336 and C330–C346. A glycan (N-linked (GlcNAc...) asparagine) is linked at N323.

Belongs to the polysaccharide monooxygenase AA9 family. It depends on Cu(2+) as a cofactor.

It localises to the secreted. It catalyses the reaction [(1-&gt;4)-beta-D-glucosyl]n+m + reduced acceptor + O2 = 4-dehydro-beta-D-glucosyl-[(1-&gt;4)-beta-D-glucosyl]n-1 + [(1-&gt;4)-beta-D-glucosyl]m + acceptor + H2O.. In terms of biological role, lytic polysaccharide monooxygenase (LPMO) that depolymerizes crystalline and amorphous polysaccharides via the oxidation of scissile alpha- or beta-(1-4)-glycosidic bonds, yielding C4 oxidation products. Catalysis by LPMOs requires the reduction of the active-site copper from Cu(II) to Cu(I) by a reducing agent and H(2)O(2) or O(2) as a cosubstrate. Active on cellulose and cello-oligosaccharides, as well as plant cell wall-derived hemicellulosic polysaccharides. Also active on cello-oligosaccharides such as cellohexaose, cellopentaose or cellotetraose. In Aspergillus fumigatus (strain ATCC MYA-4609 / CBS 101355 / FGSC A1100 / Af293) (Neosartorya fumigata), this protein is AA9 family lytic polysaccharide monooxygenase C.